The chain runs to 770 residues: MAMGKYSRVDGKKSSGYGLTITIVLIVSLCLVGAWMFMSSWSAPTESIDFSANERTKDVDTTKSDFKSEEVDRGSKSFPDEKNEETEVVTETNEEKTDPEKSGEENSGEKTESAEERKEFDDKNGDGDRKNGDGEKDTESESDETKQKEKTQLEESSEENKSEDSNGTEENAGESEENTEKKSEENAGETEESTEKSKDVFPAGDQAEITKESSTGSGAWSTQLVESQNEKKAQVSSIKWKVCNVTAGPDYIPCLDNWQAIRKLHSTKHYEHRERHCPEESPRCLVSLPEGYKRSIKWPKSREKIWYTNIPHTKLAEVKGHQNWVKMSGEYLTFPGGGTQFKNGALHYIDFLQESYPDIAWGNRTRVILDVGCGVASFGGYLFDRDVLALSFAPKDEHEAQVQFALERGIPAMSNVMGTKRLPFPGSVFDLIHCARCRVPWHIEGGKLLLELNRALRPGGFFVWSATPVYRKTEEDVGIWKAMSKLTKAMCWELMTIKKDELNEVGAAIYQKPMSNKCYNERSQNEPPLCKDSDDQNAAWNVPLEACIHKVTEDSSKRGAVWPESWPERVETVPQWLDSQEGVYGKPAQEDFTADHERWKTIVSKSYLNGMGIDWSYVRNVMDMRAVYGGFAAALKDLKLWVMNVVPIDSPDTLPIIYERGLFGIYHDWCESFSTYPRTYDLLHADHLFSSLKKRCNLVGVMAEVDRILRPQGTFIVRDDMETIGEIEKMVKSMKWNVRMTHSKDGEGLLSVQKSWWRPTEAETIQSAIA.

At 1–17 the chain is on the cytoplasmic side; that stretch reads MAMGKYSRVDGKKSSGY. Residues 18–38 form a helical; Signal-anchor for type II membrane protein membrane-spanning segment; that stretch reads GLTITIVLIVSLCLVGAWMFM. Residues 39-770 lie on the Lumenal side of the membrane; it reads SSWSAPTESI…EAETIQSAIA (732 aa). Basic and acidic residues-rich tracts occupy residues 54 to 81 and 93 to 164; these read ERTK…FPDE and NEEK…KSED. The segment at 54–223 is disordered; that stretch reads ERTKDVDTTK…STGSGAWSTQ (170 aa). Asn160 and Asn166 each carry an N-linked (GlcNAc...) asparagine glycan. A compositionally biased stretch (polar residues) spans 212–223; it reads ESSTGSGAWSTQ. 2 N-linked (GlcNAc...) asparagine glycosylation sites follow: Asn244 and Asn363.

This sequence belongs to the methyltransferase superfamily.

The protein resides in the golgi apparatus membrane. The chain is Probable methyltransferase PMT24 from Arabidopsis thaliana (Mouse-ear cress).